Reading from the N-terminus, the 339-residue chain is Thermospermine synthase ACAULIS5 (339 aa).

The PABS domain occupies 33–270 (CHWYEETIDD…DTWGWVMASD (238 aa)). S-adenosyl 3-(methylsulfanyl)propylamine contacts are provided by residues Gln-62, Glu-117, Asp-137, and 168-169 (DA). Catalysis depends on Asp-186, which acts as the Proton acceptor.

It belongs to the spermidine/spermine synthase family. In terms of tissue distribution, highly expressed in stem internodes and roots. Lower levels in young seedlings before flowering and rosette leaves. Expressed in the vascular tissues. Restricted to procambial and/or provascular cells during primary root development and early leaves development.

It carries out the reaction S-adenosyl 3-(methylsulfanyl)propylamine + spermidine = thermospermine + S-methyl-5'-thioadenosine + H(+). Required for correct xylem specification through regulation of the lifetime of the xylem elements. Prevents premature death of the xylem vessel elements. The chain is Thermospermine synthase ACAULIS5 (ACL5) from Arabidopsis thaliana (Mouse-ear cress).